Consider the following 169-residue polypeptide: Ribosome maturation factor RimM (169 aa).

A PRC barrel domain is found at 92-166 (NKEYYWNDIF…IVIDLTNLNN (75 aa)).

This sequence belongs to the RimM family. As to quaternary structure, binds ribosomal protein uS19.

Its subcellular location is the cytoplasm. In terms of biological role, an accessory protein needed during the final step in the assembly of 30S ribosomal subunit, possibly for assembly of the head region. Essential for efficient processing of 16S rRNA. May be needed both before and after RbfA during the maturation of 16S rRNA. It has affinity for free ribosomal 30S subunits but not for 70S ribosomes. The sequence is that of Ribosome maturation factor RimM from Buchnera aphidicola subsp. Cinara cedri (strain Cc).